Reading from the N-terminus, the 326-residue chain is Malate dehydrogenase (326 aa).

12–18 (GGTGQIA) is an NAD(+) binding site. Residues arginine 93 and arginine 99 each coordinate substrate. Residues asparagine 106, glutamine 113, and 130 to 132 (VGN) each bind NAD(+). Substrate contacts are provided by asparagine 132 and arginine 163. The Proton acceptor role is filled by histidine 188.

The protein belongs to the LDH/MDH superfamily. MDH type 2 family.

It carries out the reaction (S)-malate + NAD(+) = oxaloacetate + NADH + H(+). Catalyzes the reversible oxidation of malate to oxaloacetate. This chain is Malate dehydrogenase, found in Chlamydia trachomatis serovar A (strain ATCC VR-571B / DSM 19440 / HAR-13).